The sequence spans 537 residues: Mitochondria-eating protein (537 aa).

The interval Met-1–Arg-273 is interaction with YWHAG/14-3-3 protein gamma. Residues Ser-85, Ser-127, Ser-154, and Ser-157 each carry the phosphoserine modification. A coiled-coil region spans residues Gly-115–Arg-253. Disordered stretches follow at residues Gln-171–Arg-221 and Val-249–Ser-293. A compositionally biased stretch (basic and acidic residues) spans Glu-179–Ser-217. A compositionally biased stretch (low complexity) spans Arg-253–Pro-287. Phosphoserine is present on residues Ser-286 and Ser-508.

Belongs to the MIEAP family. As to quaternary structure, interacts (via coiled-coil domains) with BNIP3L (via BH3 domain). Interacts (via coiled-coil domains) with BNIP3 (via BH3 domain). Interacts with YWHAG/14-3-3 protein gamma; a protein that also plays a role in MALM.

It localises to the cytoplasm. The protein resides in the cytosol. The protein localises to the mitochondrion outer membrane. Its subcellular location is the mitochondrion matrix. In terms of biological role, key regulator of mitochondrial quality that mediates the repairing or degradation of unhealthy mitochondria in response to mitochondrial damage. Mediator of mitochondrial protein catabolic process (also named MALM) by mediating the degradation of damaged proteins inside mitochondria by promoting the accumulation in the mitochondrial matrix of hydrolases that are characteristic of the lysosomal lumen. Also involved in mitochondrion degradation of damaged mitochondria by promoting the formation of vacuole-like structures (named MIV), which engulf and degrade unhealthy mitochondria by accumulating lysosomes. The physical interaction of SPATA18/MIEAP, BNIP3 and BNIP3L/NIX at the mitochondrial outer membrane regulates the opening of a pore in the mitochondrial double membrane in order to mediate the translocation of lysosomal proteins from the cytoplasm to the mitochondrial matrix. Binds cardiolipin. May form molecular condensates (non-membrane-bounded organelles) within mitochondria that compartmentalize and promote cardiolipin metabolism. The sequence is that of Mitochondria-eating protein (SPATA18) from Bos taurus (Bovine).